A 77-amino-acid polypeptide reads, in one-letter code: Anionic peptide 17.1 (77 aa).

The N-terminal stretch at 1 to 24 (MASKTVLVLLLVSVLVSTFCTAKA) is a signal peptide.

It belongs to the non-disulfide-bridged peptide (NDBP) superfamily. Long chain multifunctional peptide (group 2) family. As to expression, expressed by the venom gland.

The protein resides in the secreted. The polypeptide is Anionic peptide 17.1 (Lychas mucronatus (Chinese swimming scorpion)).